The primary structure comprises 167 residues: 3-isopropylmalate dehydratase small subunit (167 aa).

Belongs to the LeuD family. LeuD type 2 subfamily. As to quaternary structure, heterodimer of LeuC and LeuD.

The enzyme catalyses (2R,3S)-3-isopropylmalate = (2S)-2-isopropylmalate. It participates in amino-acid biosynthesis; L-leucine biosynthesis; L-leucine from 3-methyl-2-oxobutanoate: step 2/4. Functionally, catalyzes the isomerization between 2-isopropylmalate and 3-isopropylmalate, via the formation of 2-isopropylmaleate. The protein is 3-isopropylmalate dehydratase small subunit of Nitratidesulfovibrio vulgaris (strain ATCC 29579 / DSM 644 / CCUG 34227 / NCIMB 8303 / VKM B-1760 / Hildenborough) (Desulfovibrio vulgaris).